The sequence spans 191 residues: Putative leucine efflux protein (191 aa).

The next 5 helical transmembrane spans lie at 28–48, 50–70, 101–121, 132–152, and 167–187; these read GVFIGDAVLMFLAWAGVATLI, TTPILFNIVRYLGAFYLLYLE, ILSLTNPKAILFYVSFFVQFI, FFILATTLELVSFCYLSFLII, and LAKVGNSLIGLMFVGFAARLA.

Belongs to the Rht family.

It is found in the cell inner membrane. The catalysed reaction is L-leucine(in) + H(+)(out) = L-leucine(out) + H(+)(in). Its function is as follows. Exporter of leucine. The protein is Putative leucine efflux protein (leuE) of Shigella boydii serotype 4 (strain Sb227).